We begin with the raw amino-acid sequence, 543 residues long: Chaperonin GroEL 1 (543 aa).

ATP is bound by residues 29–32 (TLGP), Lys50, 86–90 (DGTTT), Gly414, and Asp493. The disordered stretch occupies residues 524-543 (KEDKGAPAGMGGMPPGGGMY). Residues 531 to 543 (AGMGGMPPGGGMY) are compositionally biased toward gly residues.

This sequence belongs to the chaperonin (HSP60) family. In terms of assembly, forms a cylinder of 14 subunits composed of two heptameric rings stacked back-to-back. Interacts with the co-chaperonin GroES.

The protein resides in the cytoplasm. It catalyses the reaction ATP + H2O + a folded polypeptide = ADP + phosphate + an unfolded polypeptide.. Functionally, together with its co-chaperonin GroES, plays an essential role in assisting protein folding. The GroEL-GroES system forms a nano-cage that allows encapsulation of the non-native substrate proteins and provides a physical environment optimized to promote and accelerate protein folding. The polypeptide is Chaperonin GroEL 1 (Syntrophobacter fumaroxidans (strain DSM 10017 / MPOB)).